Consider the following 681-residue polypeptide: Amine oxidase [copper-containing] alpha 3, peroxisomal (681 aa).

Position 323 to 334 (323 to 334 (YLDCGDFGCGQC)) interacts with substrate. The Proton acceptor role is filled by aspartate 325. Cysteine 344 and cysteine 370 are oxidised to a cystine. 410-415 (VGNYDY) is a binding site for substrate. The Schiff-base intermediate with substrate; via topaquinone role is filled by tyrosine 413. Tyrosine 413 carries the 2',4',5'-topaquinone modification. Cu cation is bound by residues histidine 470 and histidine 472. Aspartate 481, aspartate 621, and isoleucine 622 together coordinate Mn(2+). Histidine 632 is a binding site for Cu cation.

Belongs to the copper/topaquinone oxidase family. Topaquinone (TPQ) is generated by copper-dependent autoxidation of a specific tyrosyl residue. Mostly expressed in stems, and, at lower levels, in flowers and leaves. Mainly detectable in stipules, hypocotyls and roots.

The protein resides in the peroxisome. The enzyme catalyses a primary methyl amine + O2 + H2O = an aldehyde + H2O2 + NH4(+). It participates in amine and polyamine degradation; putrescine degradation. In terms of biological role, copper amine oxidase that can use putrescine and spermidine as substrates. Involved in putrescine catabolism in peroxisomes. This is Amine oxidase [copper-containing] alpha 3, peroxisomal from Arabidopsis thaliana (Mouse-ear cress).